A 177-amino-acid chain; its full sequence is R-phycoerythrin beta chain (177 aa).

Positions 50 and 61 each coordinate phycourobilin. Asn72 is modified (N4-methylasparagine). (2R,3E)-phycoerythrobilin-binding residues include Cys82 and Cys158.

Belongs to the phycobiliprotein family. As to quaternary structure, heterodimer of an alpha and a beta chain. Post-translationally, contains two covalently linked phycoerythrobilin chromophores and one covalently linked phycourobilin chromophore.

It is found in the plastid. Its subcellular location is the chloroplast thylakoid membrane. In terms of biological role, light-harvesting photosynthetic bile pigment-protein from the phycobiliprotein complex. The sequence is that of R-phycoerythrin beta chain (cpeB) from Porphyra purpurea (Red seaweed).